The sequence spans 177 residues: Large ribosomal subunit protein uL6 (177 aa).

Belongs to the universal ribosomal protein uL6 family. As to quaternary structure, part of the 50S ribosomal subunit.

This protein binds to the 23S rRNA, and is important in its secondary structure. It is located near the subunit interface in the base of the L7/L12 stalk, and near the tRNA binding site of the peptidyltransferase center. The chain is Large ribosomal subunit protein uL6 from Rhizobium rhizogenes (strain K84 / ATCC BAA-868) (Agrobacterium radiobacter).